The following is a 142-amino-acid chain: Large ribosomal subunit protein uL13 (142 aa).

Belongs to the universal ribosomal protein uL13 family. As to quaternary structure, part of the 50S ribosomal subunit.

In terms of biological role, this protein is one of the early assembly proteins of the 50S ribosomal subunit, although it is not seen to bind rRNA by itself. It is important during the early stages of 50S assembly. This Haemophilus influenzae (strain 86-028NP) protein is Large ribosomal subunit protein uL13.